A 280-amino-acid polypeptide reads, in one-letter code: Protoheme IX farnesyltransferase 2 (280 aa).

9 helical membrane passes run 12–32 (VIWLLILASVAGYIYGGGGVD), 35–55 (LFSLLAVAFLSTGGSAAFNHY), 76–96 (LITPNAALAYSLALSATGISL), 98–118 (FLLLGLLPGLFVLLGWLFYAV), 129–149 (WLNIFGGGFAGNAVFLGGYAL), 158–178 (AVLISFAIYLWTPSHIWALAF), 199–221 (ERAVAVISAINAAAAAYILWLYL), 226–248 (GAGGAIVALGVAATIATSIYAAV), and 255–275 (MWKMYKASSPMLTLFLIALMI).

The protein belongs to the UbiA prenyltransferase family. Protoheme IX farnesyltransferase subfamily.

The protein localises to the cell membrane. It carries out the reaction heme b + (2E,6E)-farnesyl diphosphate + H2O = Fe(II)-heme o + diphosphate. Its pathway is porphyrin-containing compound metabolism; heme O biosynthesis; heme O from protoheme: step 1/1. In terms of biological role, converts heme B (protoheme IX) to heme O by substitution of the vinyl group on carbon 2 of heme B porphyrin ring with a hydroxyethyl farnesyl side group. This chain is Protoheme IX farnesyltransferase 2, found in Pyrobaculum aerophilum (strain ATCC 51768 / DSM 7523 / JCM 9630 / CIP 104966 / NBRC 100827 / IM2).